The primary structure comprises 142 residues: Large ribosomal subunit protein uL11 (142 aa).

Belongs to the universal ribosomal protein uL11 family. In terms of assembly, part of the ribosomal stalk of the 50S ribosomal subunit. Interacts with L10 and the large rRNA to form the base of the stalk. L10 forms an elongated spine to which L12 dimers bind in a sequential fashion forming a multimeric L10(L12)X complex. Post-translationally, one or more lysine residues are methylated.

Functionally, forms part of the ribosomal stalk which helps the ribosome interact with GTP-bound translation factors. In Rhizobium meliloti (strain 1021) (Ensifer meliloti), this protein is Large ribosomal subunit protein uL11.